The following is a 151-amino-acid chain: Ubiquitin-conjugating enzyme E2 W (151 aa).

Residues 3–151 (SMQKRLQKEL…TKWWYHDDTC (149 aa)) enclose the UBC core domain. Cysteine 91 (glycyl thioester intermediate) is an active-site residue.

Belongs to the ubiquitin-conjugating enzyme family.

It localises to the nucleus. It catalyses the reaction S-ubiquitinyl-[E1 ubiquitin-activating enzyme]-L-cysteine + [E2 ubiquitin-conjugating enzyme]-L-cysteine = [E1 ubiquitin-activating enzyme]-L-cysteine + S-ubiquitinyl-[E2 ubiquitin-conjugating enzyme]-L-cysteine.. It carries out the reaction S-ubiquitinyl-[E1 ubiquitin-activating enzyme]-L-cysteine + [acceptor protein]-N-terminal-amino acid = [E1 ubiquitin-activating enzyme]-L-cysteine + N-terminal-ubiquitinyl-[acceptor protein].. It functions in the pathway protein modification; protein ubiquitination. Its function is as follows. Accepts ubiquitin from the E1 complex and catalyzes its covalent attachment to other proteins. Catalyzes monoubiquitination. Involved in degradation of misfolded chaperone substrate and DNA repair. The chain is Ubiquitin-conjugating enzyme E2 W (ube2w) from Xenopus tropicalis (Western clawed frog).